A 589-amino-acid polypeptide reads, in one-letter code: 2-succinyl-5-enolpyruvyl-6-hydroxy-3-cyclohexene-1-carboxylate synthase (589 aa).

This sequence belongs to the TPP enzyme family. MenD subfamily. Homodimer. Mg(2+) is required as a cofactor. Mn(2+) serves as cofactor. It depends on thiamine diphosphate as a cofactor.

It carries out the reaction isochorismate + 2-oxoglutarate + H(+) = 5-enolpyruvoyl-6-hydroxy-2-succinyl-cyclohex-3-ene-1-carboxylate + CO2. The protein operates within quinol/quinone metabolism; 1,4-dihydroxy-2-naphthoate biosynthesis; 1,4-dihydroxy-2-naphthoate from chorismate: step 2/7. It participates in quinol/quinone metabolism; menaquinone biosynthesis. Its function is as follows. Catalyzes the thiamine diphosphate-dependent decarboxylation of 2-oxoglutarate and the subsequent addition of the resulting succinic semialdehyde-thiamine pyrophosphate anion to isochorismate to yield 2-succinyl-5-enolpyruvyl-6-hydroxy-3-cyclohexene-1-carboxylate (SEPHCHC). This Myxococcus xanthus (strain DK1622) protein is 2-succinyl-5-enolpyruvyl-6-hydroxy-3-cyclohexene-1-carboxylate synthase.